The sequence spans 257 residues: Triosephosphate isomerase (257 aa).

Substrate is bound at residue 9-11; sequence NWK. Histidine 95 serves as the catalytic Electrophile. Catalysis depends on glutamate 168, which acts as the Proton acceptor. Substrate is bound by residues glycine 174, serine 213, and 234–235; that span reads GG.

The protein belongs to the triosephosphate isomerase family. Homodimer.

It localises to the cytoplasm. The catalysed reaction is D-glyceraldehyde 3-phosphate = dihydroxyacetone phosphate. Its pathway is carbohydrate biosynthesis; gluconeogenesis. The protein operates within carbohydrate degradation; glycolysis; D-glyceraldehyde 3-phosphate from glycerone phosphate: step 1/1. Functionally, involved in the gluconeogenesis. Catalyzes stereospecifically the conversion of dihydroxyacetone phosphate (DHAP) to D-glyceraldehyde-3-phosphate (G3P). This Acidithiobacillus ferrooxidans (strain ATCC 23270 / DSM 14882 / CIP 104768 / NCIMB 8455) (Ferrobacillus ferrooxidans (strain ATCC 23270)) protein is Triosephosphate isomerase.